Consider the following 371-residue polypeptide: Zinc finger CCCH domain-containing protein 21 (371 aa).

Residues 1–64 (MPPKQQPKAD…AAKKKKEEEK (64 aa)) form a disordered region. Residues 10 to 23 (DLAKKQKQVEDKTF) show a composition bias toward basic and acidic residues. A compositionally biased stretch (polar residues) spans 34-46 (VQKYVQSLKQSVQ). C3H1-type zinc fingers lie at residues 88-115 (DPKSILCEFFKAGQCQKGFKCKFSHDLN) and 159-197 (KPTDIVCKYFLDAVEKKQYGWFWSCPNGGKECHYRHALP). Coiled coils occupy residues 205-237 (QMKALLEEESSKKLAVEDEIENERAKLQTATQM) and 283-317 (FVDDAEACEEYEREREQEETEQKAKNKEAEAGTSK). The interval 290–371 (CEEYEREREQ…IREPNDEGSS (82 aa)) is disordered. Residues 292–312 (EYEREREQEETEQKAKNKEAE) show a composition bias toward basic and acidic residues. Positions 330 to 352 (NEEEEDDDDDDDDLDMDELDELE) are enriched in acidic residues.

The chain is Zinc finger CCCH domain-containing protein 21 from Arabidopsis thaliana (Mouse-ear cress).